The sequence spans 249 residues: 2,3-bisphosphoglycerate-dependent phosphoglycerate mutase (249 aa).

Substrate contacts are provided by residues 9–16 (RHGQSQWN), 22–23 (TG), R61, 88–91 (ERHY), K99, 115–116 (RR), and 184–185 (GN). H10 serves as the catalytic Tele-phosphohistidine intermediate. E88 functions as the Proton donor/acceptor in the catalytic mechanism.

Belongs to the phosphoglycerate mutase family. BPG-dependent PGAM subfamily. As to quaternary structure, homodimer.

It carries out the reaction (2R)-2-phosphoglycerate = (2R)-3-phosphoglycerate. Its pathway is carbohydrate degradation; glycolysis; pyruvate from D-glyceraldehyde 3-phosphate: step 3/5. Its function is as follows. Catalyzes the interconversion of 2-phosphoglycerate and 3-phosphoglycerate. This Xylella fastidiosa (strain M12) protein is 2,3-bisphosphoglycerate-dependent phosphoglycerate mutase.